The chain runs to 249 residues: Probable transcriptional regulatory protein IL1088 (249 aa).

The protein belongs to the TACO1 family.

The protein resides in the cytoplasm. The chain is Probable transcriptional regulatory protein IL1088 from Idiomarina loihiensis (strain ATCC BAA-735 / DSM 15497 / L2-TR).